The following is a 209-amino-acid chain: MADSKEIKRVLLGPLFDNNPIALQILGVCSALAVTTKLETALVMTLAVTLVTAFSSFFISLIRNHIPNSVRIIVQMVIIASLVIVVDQILRAYAYEISKQLSVFVGLIITNCIVMGRAEAYAMKSPPIESFMDGIGNGLGYGVVLVLVGFVRELIGSGKLFGVTVLETVQNGGWYQPNGLFLLAPSAFFIIGLLIWGLRTLKPAQIEKE.

Helical transmembrane passes span 42-62, 70-90, 103-123, 131-151, and 178-198; these read LVMT…ISLI, VRII…DQIL, VFVG…AYAM, FMDG…VGFV, and NGLF…IWGL.

This sequence belongs to the NqrDE/RnfAE family. In terms of assembly, composed of six subunits; NqrA, NqrB, NqrC, NqrD, NqrE and NqrF.

It localises to the cell inner membrane. It catalyses the reaction a ubiquinone + n Na(+)(in) + NADH + H(+) = a ubiquinol + n Na(+)(out) + NAD(+). Functionally, NQR complex catalyzes the reduction of ubiquinone-1 to ubiquinol by two successive reactions, coupled with the transport of Na(+) ions from the cytoplasm to the periplasm. NqrA to NqrE are probably involved in the second step, the conversion of ubisemiquinone to ubiquinol. The chain is Na(+)-translocating NADH-quinone reductase subunit D from Yersinia enterocolitica serotype O:8 / biotype 1B (strain NCTC 13174 / 8081).